We begin with the raw amino-acid sequence, 465 residues long: Ribulose bisphosphate carboxylase large chain (465 aa).

K4 carries the post-translational modification N6,N6,N6-trimethyllysine. The substrate site is built by N113 and T163. K165 (proton acceptor) is an active-site residue. K167 lines the substrate pocket. Mg(2+) is bound by residues K191, D193, and E194. N6-carboxylysine is present on K191. H284 acts as the Proton acceptor in catalysis. 3 residues coordinate substrate: R285, H317, and S369.

The protein belongs to the RuBisCO large chain family. Type I subfamily. Heterohexadecamer of 8 large chains and 8 small chains; disulfide-linked. The disulfide link is formed within the large subunit homodimers. It depends on Mg(2+) as a cofactor. Post-translationally, the disulfide bond which can form in the large chain dimeric partners within the hexadecamer appears to be associated with oxidative stress and protein turnover.

The protein resides in the plastid. It localises to the chloroplast. It carries out the reaction 2 (2R)-3-phosphoglycerate + 2 H(+) = D-ribulose 1,5-bisphosphate + CO2 + H2O. The enzyme catalyses D-ribulose 1,5-bisphosphate + O2 = 2-phosphoglycolate + (2R)-3-phosphoglycerate + 2 H(+). Functionally, ruBisCO catalyzes two reactions: the carboxylation of D-ribulose 1,5-bisphosphate, the primary event in carbon dioxide fixation, as well as the oxidative fragmentation of the pentose substrate in the photorespiration process. Both reactions occur simultaneously and in competition at the same active site. This is Ribulose bisphosphate carboxylase large chain from Combretum indicum (Rangoon creeper).